The sequence spans 1288 residues: Probable serine/threonine-protein kinase drkD (1288 aa).

Polar residues predominate over residues 1 to 12 (MEGSFQFNKSKQ). Disordered regions lie at residues 1 to 132 (MEGS…QYHP), 156 to 223 (FNVS…PEEI), and 269 to 386 (SFGH…DDEE). 2 stretches are compositionally biased toward low complexity: residues 13–79 (TNNN…NSTS) and 156–220 (FNVS…QQQP). Positions 221–248 (EEIEGELNRERQERDKMLHEEAEIEQYK) form a coiled coil. The segment covering 271–291 (GHITSANSDETTNNESGSPIN) has biased composition (polar residues). A compositionally biased stretch (basic and acidic residues) spans 302-343 (PHSSHNEDHQSDQDNHGQFMNDEHQSTDDDQNKSDNEKESES). The segment covering 344-354 (ARNSGDLQQKV) has biased composition (polar residues). Over residues 376 to 386 (EGEEEDDDDEE) the composition is skewed to acidic residues. LRR repeat units follow at residues 400-421 (KSTK…VWSI), 423-444 (ELRD…IGLL), 446-468 (HLKR…YSLP), 469-490 (RLTT…INRL), 492-513 (SLKT…TNLH), 517-538 (NLVE…MLES), and 540-561 (HLQV…LKKS). Disordered stretches follow at residues 690 to 717 (WDQQ…VLTG), 733 to 764 (PTQQ…QQQQ), and 796 to 825 (QQQQ…KDHQ). Polar residues-rich tracts occupy residues 701 to 717 (SPNV…VLTG) and 733 to 757 (PTQQ…HNNN). The Protein kinase domain maps to 851–1104 (IAIGARIGRG…EILPIMEGMI (254 aa)). Residues 857–865 (IGRGGYGQV) and Lys878 each bind ATP. Asp974 serves as the catalytic Proton acceptor. 2 disordered regions span residues 1118-1141 (GRPI…QNMA) and 1245-1288 (QQQL…NDKK). A compositionally biased stretch (low complexity) spans 1257–1268 (NRLNYNFNNSNN). Over residues 1269–1282 (SDIQPMQQENNYRM) the composition is skewed to polar residues.

Belongs to the protein kinase superfamily. TKL Ser/Thr protein kinase family.

The catalysed reaction is L-seryl-[protein] + ATP = O-phospho-L-seryl-[protein] + ADP + H(+). It carries out the reaction L-threonyl-[protein] + ATP = O-phospho-L-threonyl-[protein] + ADP + H(+). This is Probable serine/threonine-protein kinase drkD (drkD) from Dictyostelium discoideum (Social amoeba).